The chain runs to 474 residues: tRNA-2-methylthio-N(6)-dimethylallyladenosine synthase (474 aa).

An MTTase N-terminal domain is found at 3–120; the sequence is KKLLIKTWGC…LPEMIRQSQS (118 aa). C12, C49, C83, C157, C161, and C164 together coordinate [4Fe-4S] cluster. The Radical SAM core domain maps to 143 to 375; that stretch reads KAEGATAFVS…QQQVNSQAMR (233 aa). In terms of domain architecture, TRAM spans 378–441; that stretch reads RLMLDTEQRV…ANSLRGELVR (64 aa).

This sequence belongs to the methylthiotransferase family. MiaB subfamily. In terms of assembly, monomer. The cofactor is [4Fe-4S] cluster.

It is found in the cytoplasm. The catalysed reaction is N(6)-dimethylallyladenosine(37) in tRNA + (sulfur carrier)-SH + AH2 + 2 S-adenosyl-L-methionine = 2-methylsulfanyl-N(6)-dimethylallyladenosine(37) in tRNA + (sulfur carrier)-H + 5'-deoxyadenosine + L-methionine + A + S-adenosyl-L-homocysteine + 2 H(+). Its function is as follows. Catalyzes the methylthiolation of N6-(dimethylallyl)adenosine (i(6)A), leading to the formation of 2-methylthio-N6-(dimethylallyl)adenosine (ms(2)i(6)A) at position 37 in tRNAs that read codons beginning with uridine. This Aliivibrio fischeri (strain ATCC 700601 / ES114) (Vibrio fischeri) protein is tRNA-2-methylthio-N(6)-dimethylallyladenosine synthase.